The sequence spans 401 residues: Argininosuccinate synthase (401 aa).

9-17 (AYSGGLDTS) lines the ATP pocket. Tyr-88 provides a ligand contact to L-citrulline. Gly-118 provides a ligand contact to ATP. 3 residues coordinate L-aspartate: Thr-120, Asn-124, and Asp-125. Asn-124 contributes to the L-citrulline binding site. Residues Arg-128, Ser-177, Ser-186, Glu-262, and Tyr-274 each coordinate L-citrulline.

This sequence belongs to the argininosuccinate synthase family. Type 1 subfamily. Homotetramer.

It is found in the cytoplasm. It carries out the reaction L-citrulline + L-aspartate + ATP = 2-(N(omega)-L-arginino)succinate + AMP + diphosphate + H(+). It participates in amino-acid biosynthesis; L-arginine biosynthesis; L-arginine from L-ornithine and carbamoyl phosphate: step 2/3. In Chlorobaculum parvum (strain DSM 263 / NCIMB 8327) (Chlorobium vibrioforme subsp. thiosulfatophilum), this protein is Argininosuccinate synthase.